We begin with the raw amino-acid sequence, 138 residues long: MNAVVLFSVLFALACGQVSSFCIPTEYMMYVDRRECAYCLTINTTICAGYCMTRDINGKLFLPKYALSQDVCTYRDFTYRTVEIPGCPHHVAPYFSYPVALSCKCGKCNTDYSDCTHEAVKTNYCTKPQTFYLGGFSG.

Residues M1–S20 form the signal peptide. 6 disulfides stabilise this stretch: C22/C72, C36/C87, C39/C125, C47/C103, C51/C105, and C108/C115. N-linked (GlcNAc...) asparagine glycosylation occurs at N43. A propeptide spanning residues L133–G138 is cleaved from the precursor.

It belongs to the glycoprotein hormones subunit beta family. As to quaternary structure, heterodimer of a common alpha chain and a unique beta chain which confers biological specificity to thyrotropin, lutropin, follitropin and gonadotropin.

It localises to the secreted. Functionally, indispensable for the control of thyroid structure and metabolism. This Rattus norvegicus (Rat) protein is Thyrotropin subunit beta (Tshb).